Here is a 159-residue protein sequence, read N- to C-terminus: Small ribosomal subunit protein uS17y (159 aa).

Belongs to the universal ribosomal protein uS17 family.

The protein resides in the cytoplasm. The polypeptide is Small ribosomal subunit protein uS17y (RPS11B) (Arabidopsis thaliana (Mouse-ear cress)).